Consider the following 539-residue polypeptide: Cytochrome P450 monooxygenase buaD (539 aa).

An N-terminal signal peptide occupies residues 1 to 16; the sequence is MLVPVLTLLGTLTATG. Residue N120 is glycosylated (N-linked (GlcNAc...) asparagine). C478 lines the heme pocket. N520 carries N-linked (GlcNAc...) asparagine glycosylation.

It belongs to the cytochrome P450 family. Requires heme as cofactor.

Its pathway is mycotoxin biosynthesis. Its function is as follows. Cytochrome P450 monooxygenase; part of the gene cluster that mediates the biosynthesis of burnettramic acids, an unusual class of bolaamphiphilic pyrrolizidinediones that display potent antibacterial, antifungal, and cytotoxic activities. The first step of the biosynthesis of burnettramic acids is the hydroxylation of proline by the proline hydroxylase buaE to generate 4-hydroxyproline. The PKS-NRPS buaA and trans-enoyl reductase buaC construct the highly reduced polyketide chain, and the condensation (C) domain of buaA then catalyzes the amide bond formation with the activated 4-hydroxyproline. This is followed by the R domain releasing the nascent polyketide-peptide directly via a Dieckmann condensation to afford a tetramic acid fused to the hydroxyproline, generating the bicyclic pyrrolidinedione moiety. The cytochrome P450 monooxygenases buaD and buaG are likely responsible for the multiple hydroxylations on the polyketide chain and its terminus, although in the heterologous context, buaD does not appear to be required. Therefore, while buaG may be a multifunctional cytochrome P450 monooxygenase, it cannot be ruled out that the two secondary alcohols on the polyketide chain could have an acetate origin. Finally, the glycosyltransferase buaB transfers beta-D-mannose to the aglycone burnettramic acid A to form burnettramic acid A. Burnettramic acid B is a minor cis-pyrrolizidine epimer of burnettramic acid A and it is likely that small amounts of it form naturally in acidic environments. The sequence is that of Cytochrome P450 monooxygenase buaD from Petromyces alliaceus (Aspergillus alliaceus).